The sequence spans 224 residues: Cytidylate kinase (224 aa).

Residue 11 to 19 (GPAAAGKST) coordinates ATP.

It belongs to the cytidylate kinase family. Type 1 subfamily.

Its subcellular location is the cytoplasm. The enzyme catalyses CMP + ATP = CDP + ADP. It carries out the reaction dCMP + ATP = dCDP + ADP. This chain is Cytidylate kinase, found in Geobacillus thermodenitrificans (strain NG80-2).